Reading from the N-terminus, the 310-residue chain is Elongation factor Ts (310 aa).

The segment at 80-83 (TDFV) is involved in Mg(2+) ion dislocation from EF-Tu.

The protein belongs to the EF-Ts family.

Its subcellular location is the cytoplasm. Associates with the EF-Tu.GDP complex and induces the exchange of GDP to GTP. It remains bound to the aminoacyl-tRNA.EF-Tu.GTP complex up to the GTP hydrolysis stage on the ribosome. This Methylocella silvestris (strain DSM 15510 / CIP 108128 / LMG 27833 / NCIMB 13906 / BL2) protein is Elongation factor Ts.